The primary structure comprises 613 residues: Dihydroxy-acid dehydratase (613 aa).

D81 contributes to the Mg(2+) binding site. Residue C122 participates in [2Fe-2S] cluster binding. The Mg(2+) site is built by D123 and K124. K124 carries the N6-carboxylysine modification. C195 contacts [2Fe-2S] cluster. E491 lines the Mg(2+) pocket. The active-site Proton acceptor is the S517.

It belongs to the IlvD/Edd family. Homodimer. Requires [2Fe-2S] cluster as cofactor. The cofactor is Mg(2+).

It catalyses the reaction (2R)-2,3-dihydroxy-3-methylbutanoate = 3-methyl-2-oxobutanoate + H2O. It carries out the reaction (2R,3R)-2,3-dihydroxy-3-methylpentanoate = (S)-3-methyl-2-oxopentanoate + H2O. Its pathway is amino-acid biosynthesis; L-isoleucine biosynthesis; L-isoleucine from 2-oxobutanoate: step 3/4. It functions in the pathway amino-acid biosynthesis; L-valine biosynthesis; L-valine from pyruvate: step 3/4. Functionally, functions in the biosynthesis of branched-chain amino acids. Catalyzes the dehydration of (2R,3R)-2,3-dihydroxy-3-methylpentanoate (2,3-dihydroxy-3-methylvalerate) into 2-oxo-3-methylpentanoate (2-oxo-3-methylvalerate) and of (2R)-2,3-dihydroxy-3-methylbutanoate (2,3-dihydroxyisovalerate) into 2-oxo-3-methylbutanoate (2-oxoisovalerate), the penultimate precursor to L-isoleucine and L-valine, respectively. The sequence is that of Dihydroxy-acid dehydratase from Vibrio vulnificus (strain YJ016).